Consider the following 75-residue polypeptide: Cytochrome c oxidase assembly factor 5 (75 aa).

The region spanning 28 to 66 (QSDCVLQEGKSPKECLKEGYCKALQVTFFECKRSILDNR) is the CHCH domain. A Cx10C motif motif is present at residues 31-42 (CVLQEGKSPKEC). Disulfide bonds link C31–C58 and C42–C48. The Cx9C motif signature appears at 48-58 (CKALQVTFFEC).

It belongs to the PET191 family.

Involved in an early step of the mitochondrial complex IV assembly process. This is Cytochrome c oxidase assembly factor 5 (coa5) from Xenopus laevis (African clawed frog).